Reading from the N-terminus, the 376-residue chain is Chaperone protein DnaJ (376 aa).

In terms of domain architecture, J spans 5 to 70 (DFYEVLGVGR…DKKAAYDQFG (66 aa)). The segment at 132 to 210 (GLTKELRIPT…CHGEGRVEKS (79 aa)) adopts a CR-type zinc-finger fold. Zn(2+) is bound by residues Cys145, Cys148, Cys162, Cys165, Cys184, Cys187, Cys198, and Cys201. 4 CXXCXGXG motif repeats span residues 145–152 (CDACDGSG), 162–169 (CGTCHGQG), 184–191 (CPTCHGRG), and 198–205 (CNKCHGEG).

It belongs to the DnaJ family. In terms of assembly, homodimer. Requires Zn(2+) as cofactor.

It localises to the cytoplasm. Its function is as follows. Participates actively in the response to hyperosmotic and heat shock by preventing the aggregation of stress-denatured proteins and by disaggregating proteins, also in an autonomous, DnaK-independent fashion. Unfolded proteins bind initially to DnaJ; upon interaction with the DnaJ-bound protein, DnaK hydrolyzes its bound ATP, resulting in the formation of a stable complex. GrpE releases ADP from DnaK; ATP binding to DnaK triggers the release of the substrate protein, thus completing the reaction cycle. Several rounds of ATP-dependent interactions between DnaJ, DnaK and GrpE are required for fully efficient folding. Also involved, together with DnaK and GrpE, in the DNA replication of plasmids through activation of initiation proteins. The chain is Chaperone protein DnaJ from Shewanella halifaxensis (strain HAW-EB4).